A 1010-amino-acid polypeptide reads, in one-letter code: Phosphoenolpyruvate carboxylase (1010 aa).

Residues 1-18 (MIMRSPETSGASMPQSTA) show a composition bias toward polar residues. 2 disordered regions span residues 1 to 36 (MIMR…PGAG) and 132 to 154 (LRPS…PPLA). Residues H195 and K652 contribute to the active site. The interval 967–986 (QNRQPPMSESPGTPEDRRTY) is disordered.

It belongs to the PEPCase type 1 family. The cofactor is Mg(2+).

The catalysed reaction is oxaloacetate + phosphate = phosphoenolpyruvate + hydrogencarbonate. Its function is as follows. Forms oxaloacetate, a four-carbon dicarboxylic acid source for the tricarboxylic acid cycle. The sequence is that of Phosphoenolpyruvate carboxylase from Parasynechococcus marenigrum (strain WH8102).